The primary structure comprises 238 residues: Uracil-DNA glycosylase (238 aa).

Asp81 (proton acceptor) is an active-site residue.

This sequence belongs to the uracil-DNA glycosylase (UDG) superfamily. UNG family.

The protein resides in the cytoplasm. It catalyses the reaction Hydrolyzes single-stranded DNA or mismatched double-stranded DNA and polynucleotides, releasing free uracil.. Its function is as follows. Excises uracil residues from the DNA which can arise as a result of misincorporation of dUMP residues by DNA polymerase or due to deamination of cytosine. This Corynebacterium efficiens (strain DSM 44549 / YS-314 / AJ 12310 / JCM 11189 / NBRC 100395) protein is Uracil-DNA glycosylase.